A 318-amino-acid polypeptide reads, in one-letter code: Ribosomal RNA small subunit methyltransferase H (318 aa).

Residues Gly-38–His-40, Asp-58, Tyr-86, Asp-107, and Gln-114 each bind S-adenosyl-L-methionine.

It belongs to the methyltransferase superfamily. RsmH family.

The protein localises to the cytoplasm. It catalyses the reaction cytidine(1402) in 16S rRNA + S-adenosyl-L-methionine = N(4)-methylcytidine(1402) in 16S rRNA + S-adenosyl-L-homocysteine + H(+). Specifically methylates the N4 position of cytidine in position 1402 (C1402) of 16S rRNA. In Methylibium petroleiphilum (strain ATCC BAA-1232 / LMG 22953 / PM1), this protein is Ribosomal RNA small subunit methyltransferase H.